The sequence spans 609 residues: Large ribosomal subunit assembly factor BipA (609 aa).

The tr-type G domain occupies 3–198; that stretch reads QNIRNIAIIA…AIIKYAPAPN (196 aa). GTP contacts are provided by residues 15 to 20 and 128 to 131; these read DHGKTT and NKID.

Belongs to the TRAFAC class translation factor GTPase superfamily. Classic translation factor GTPase family. BipA subfamily. In terms of assembly, monomer.

The protein localises to the cytoplasm. The enzyme catalyses GTP + H2O = GDP + phosphate + H(+). Its function is as follows. A 50S ribosomal subunit assembly protein with GTPase activity, required for 50S subunit assembly at low temperatures, may also play a role in translation. Binds GTP and analogs. Binds the 70S ribosome between the 30S and 50S subunits, in a similar position as ribosome-bound EF-G; it contacts a number of ribosomal proteins, both rRNAs and the A-site tRNA. In Buchnera aphidicola subsp. Schizaphis graminum (strain Sg), this protein is Large ribosomal subunit assembly factor BipA.